The primary structure comprises 496 residues: Glutamyl-tRNA(Gln) amidotransferase subunit A (496 aa).

Catalysis depends on charge relay system residues K79 and S159. S183 acts as the Acyl-ester intermediate in catalysis.

This sequence belongs to the amidase family. GatA subfamily. As to quaternary structure, heterotrimer of A, B and C subunits.

The catalysed reaction is L-glutamyl-tRNA(Gln) + L-glutamine + ATP + H2O = L-glutaminyl-tRNA(Gln) + L-glutamate + ADP + phosphate + H(+). Functionally, allows the formation of correctly charged Gln-tRNA(Gln) through the transamidation of misacylated Glu-tRNA(Gln) in organisms which lack glutaminyl-tRNA synthetase. The reaction takes place in the presence of glutamine and ATP through an activated gamma-phospho-Glu-tRNA(Gln). This is Glutamyl-tRNA(Gln) amidotransferase subunit A from Bartonella quintana (strain Toulouse) (Rochalimaea quintana).